A 289-amino-acid chain; its full sequence is Diaminopimelate epimerase (289 aa).

Substrate contacts are provided by asparagine 13, glutamine 47, and asparagine 67. The active-site Proton donor is the cysteine 76. Substrate is bound by residues 77-78 (GN), asparagine 167, asparagine 200, and 218-219 (ER). Cysteine 227 functions as the Proton acceptor in the catalytic mechanism. Residue 228-229 (GT) coordinates substrate.

It belongs to the diaminopimelate epimerase family. Homodimer.

Its subcellular location is the cytoplasm. It carries out the reaction (2S,6S)-2,6-diaminopimelate = meso-2,6-diaminopimelate. The protein operates within amino-acid biosynthesis; L-lysine biosynthesis via DAP pathway; DL-2,6-diaminopimelate from LL-2,6-diaminopimelate: step 1/1. In terms of biological role, catalyzes the stereoinversion of LL-2,6-diaminopimelate (L,L-DAP) to meso-diaminopimelate (meso-DAP), a precursor of L-lysine and an essential component of the bacterial peptidoglycan. This chain is Diaminopimelate epimerase, found in Burkholderia mallei (strain NCTC 10247).